The following is a 326-amino-acid chain: Transcription factor bHLH143 (326 aa).

The segment covering 175–189 has biased composition (acidic residues); the sequence is SDDDDNDDWESDDEV. 2 disordered regions span residues 175–194 and 234–275; these read SDDD…STGH and RDSS…EQSR. Positions 255 to 271 are enriched in polar residues; that stretch reads PESNISSKQETGSGLSD. The bHLH domain occupies 263 to 312; that stretch reads QETGSGLSDEQSRKDKIHTALRILESVVPGAKGKEALLLLDEAIDYLKLL.

Homodimer.

The protein localises to the nucleus. The sequence is that of Transcription factor bHLH143 (BHLH143) from Arabidopsis thaliana (Mouse-ear cress).